Consider the following 284-residue polypeptide: Pantothenate synthetase (284 aa).

An ATP-binding site is contributed by 30–37 (MGNLHDGH). Catalysis depends on His37, which acts as the Proton donor. Gln61 serves as a coordination point for (R)-pantoate. Gln61 contacts beta-alanine. 149 to 152 (GEKD) is a binding site for ATP. Gln155 is a (R)-pantoate binding site. ATP-binding positions include Val178 and 186 to 189 (LSSR).

This sequence belongs to the pantothenate synthetase family. In terms of assembly, homodimer.

It localises to the cytoplasm. It catalyses the reaction (R)-pantoate + beta-alanine + ATP = (R)-pantothenate + AMP + diphosphate + H(+). The protein operates within cofactor biosynthesis; (R)-pantothenate biosynthesis; (R)-pantothenate from (R)-pantoate and beta-alanine: step 1/1. Catalyzes the condensation of pantoate with beta-alanine in an ATP-dependent reaction via a pantoyl-adenylate intermediate. The sequence is that of Pantothenate synthetase from Klebsiella pneumoniae (strain 342).